The primary structure comprises 614 residues: Dihydroxy-acid dehydratase (614 aa).

Residue Asp-81 coordinates Mg(2+). Cys-122 is a [2Fe-2S] cluster binding site. Mg(2+) is bound by residues Asp-123 and Lys-124. Lys-124 is subject to N6-carboxylysine. Cys-195 contacts [2Fe-2S] cluster. Glu-491 is a Mg(2+) binding site. The Proton acceptor role is filled by Ser-517.

It belongs to the IlvD/Edd family. Homodimer. [2Fe-2S] cluster is required as a cofactor. Requires Mg(2+) as cofactor.

The enzyme catalyses (2R)-2,3-dihydroxy-3-methylbutanoate = 3-methyl-2-oxobutanoate + H2O. It catalyses the reaction (2R,3R)-2,3-dihydroxy-3-methylpentanoate = (S)-3-methyl-2-oxopentanoate + H2O. It participates in amino-acid biosynthesis; L-isoleucine biosynthesis; L-isoleucine from 2-oxobutanoate: step 3/4. It functions in the pathway amino-acid biosynthesis; L-valine biosynthesis; L-valine from pyruvate: step 3/4. In terms of biological role, functions in the biosynthesis of branched-chain amino acids. Catalyzes the dehydration of (2R,3R)-2,3-dihydroxy-3-methylpentanoate (2,3-dihydroxy-3-methylvalerate) into 2-oxo-3-methylpentanoate (2-oxo-3-methylvalerate) and of (2R)-2,3-dihydroxy-3-methylbutanoate (2,3-dihydroxyisovalerate) into 2-oxo-3-methylbutanoate (2-oxoisovalerate), the penultimate precursor to L-isoleucine and L-valine, respectively. This Rhodopseudomonas palustris (strain BisA53) protein is Dihydroxy-acid dehydratase.